We begin with the raw amino-acid sequence, 215 residues long: ER lumen protein-retaining receptor 3 (215 aa).

Residues 1–4 (MNIF) are Lumenal-facing. Residues 5 to 24 (RLSGDVCHLIAIIILFLKIW) form a helical membrane-spanning segment. Over 25-32 (RSKSCAGI) the chain is Cytoplasmic. The helical transmembrane segment at 33–52 (SGKSQVLFALVFTTRYLDLF) threads the bilayer. An interaction with the K-D-E-L motif on target proteins region spans residues 47-48 (RY). Residues 53–58 (TSYISA) lie on the Lumenal side of the membrane. The chain crosses the membrane as a helical span at residues 59 to 79 (YNTVMKVVYLLLAYSTVGLIF). Over 80–92 (FRFRNSYDSESDS) the chain is Cytoplasmic. The chain crosses the membrane as a helical span at residues 93–110 (FRVEFLLVPVAGLSFLEN). Residues 111–116 (YAFTPL) lie on the Lumenal side of the membrane. A helical transmembrane segment spans residues 117 to 135 (EILWTFSIYLESVAILPQL). The Cytoplasmic segment spans residues 136-149 (FMITKTGEAESITA). A helical transmembrane segment spans residues 150–168 (HYLLFLGLYRALYLANWLW). Residues 159–169 (RALYLANWLWR) are interaction with the K-D-E-L motif on target proteins. Residues 169–178 (RFHTEGFYDQ) are Lumenal-facing. A helical membrane pass occupies residues 179 to 199 (IAVVSGVVQTIFYCDFFYLYF). Residues 200-215 (TRVLRGSGKMSLPMPV) are Cytoplasmic-facing. The interval 204–208 (RGSGK) is important for recycling of cargo proteins with the sequence motif K-D-E-L from the Golgi to the endoplasmic reticulum.

Belongs to the ERD2 family.

It localises to the endoplasmic reticulum membrane. Its subcellular location is the golgi apparatus membrane. It is found in the cytoplasmic vesicle. The protein localises to the COPI-coated vesicle membrane. Functionally, receptor for the C-terminal sequence motif K-D-E-L that is present on endoplasmic reticulum resident proteins and that mediates their recycling from the Golgi back to the endoplasmic reticulum. This Danio rerio (Zebrafish) protein is ER lumen protein-retaining receptor 3 (kdelr3).